Consider the following 344-residue polypeptide: Probable Delta(7)-sterol 5(6)-desaturase (344 aa).

Transmembrane regions (helical) follow at residues 76 to 96 (LSLF…FASL), 123 to 143 (QTNA…VAEV), and 160 to 180 (WYDF…IYWI). In terms of domain architecture, Fatty acid hydroxylase spans 167–292 (PLFIMFTDFG…FTTLWDRLGG (126 aa)). The short motif at 181–185 (HRGLH) is the Histidine box-1 element. Residues 194 to 198 (HKPHH) carry the Histidine box-2 motif. Residues 224–244 (HIFPFIFPLQKMAYVGLFVFI) traverse the membrane as a helical segment. Residues 269-273 (HSVHH) carry the Histidine box-3 motif.

Belongs to the sterol desaturase family. Fe cation is required as a cofactor.

It localises to the endoplasmic reticulum membrane. It catalyses the reaction a Delta(7)-sterol + 2 Fe(II)-[cytochrome b5] + O2 + 2 H(+) = a Delta(5),Delta(7)-sterol + 2 Fe(III)-[cytochrome b5] + 2 H2O. The protein operates within steroid metabolism; ergosterol biosynthesis; ergosterol from zymosterol: step 3/5. In terms of biological role, catalyzes the introduction of a C-5 double bond in the B ring of ergosterol. May contribute to the regulation of ergosterol biosynthesis. This Neurospora crassa (strain ATCC 24698 / 74-OR23-1A / CBS 708.71 / DSM 1257 / FGSC 987) protein is Probable Delta(7)-sterol 5(6)-desaturase.